A 409-amino-acid polypeptide reads, in one-letter code: Arginine deiminase (409 aa).

Cys-399 functions as the Amidino-cysteine intermediate in the catalytic mechanism.

It belongs to the arginine deiminase family.

The protein localises to the cytoplasm. The enzyme catalyses L-arginine + H2O = L-citrulline + NH4(+). Its pathway is amino-acid degradation; L-arginine degradation via ADI pathway; carbamoyl phosphate from L-arginine: step 1/2. This is Arginine deiminase from Streptococcus pneumoniae serotype 19F (strain G54).